A 364-amino-acid polypeptide reads, in one-letter code: Cell cycle control protein 50A (364 aa).

The interval 1–28 (MAMNYSAKDEVDGGPAGPPGGAAKTRRP) is disordered. An N-acetylalanine modification is found at alanine 2. Residues 2–49 (AMNYSAKDEVDGGPAGPPGGAAKTRRPDNTAFKQQRLPAWQPILTAGT) are Cytoplasmic-facing. Residues 50–70 (VLPTFFIIGLIFIPIGIGIFV) form a helical membrane-spanning segment. At 71-328 (TSNNIREIEI…SWMGGKNPFL (258 aa)) the chain is on the exoplasmic loop side. Disulfide bonds link cysteine 91-cysteine 104, cysteine 94-cysteine 102, and cysteine 157-cysteine 171. A glycan (N-linked (GlcNAc...) asparagine) is linked at asparagine 98. Residue asparagine 297 is glycosylated (N-linked (GlcNAc...) asparagine). Residues 329–349 (GIAYITIGSISFLLGVVLLVI) traverse the membrane as a helical segment. At 350-364 (NHKYRNSSNTADITI) the chain is on the cytoplasmic side.

It belongs to the CDC50/LEM3 family. As to quaternary structure, component of various P4-ATPase flippase complexes which consists of a catalytic alpha subunit and an accessory beta subunit. Interacts with ATP8A1 to form a flippase complex; this complex forms an intermediate phosphoenzyme. The ATP8A2:TMEM30A flippase complex has been purified, and ATP8B1:TMEM30A and ATP8B2:TMEM30A flippase complexes have been shown to form intermediate phosphoenzymes in vitro. Interacts with alpha subunits ATP8A1, ATP8B1, ATP8B2, ATP8B4, ATP10A, ATP10B, ATP10D, ATP11A, ATP11B and ATP11C. In terms of processing, N-glycosylated. Contains high mannose-type oligosaccharides. Expressed in photoreceptor cells; detected in retina outer segment (at protein level). Detected in hepatocytes liver sinusoidal endothelial cells and kidney brush border of the proximal tubules (at protein level). Expressed in brain (at protein level).

The protein resides in the membrane. It is found in the cell membrane. The protein localises to the golgi apparatus. Its subcellular location is the cytoplasmic vesicle. It localises to the secretory vesicle membrane. The protein resides in the apical cell membrane. Accessory component of a P4-ATPase flippase complex which catalyzes the hydrolysis of ATP coupled to the transport of aminophospholipids from the outer to the inner leaflet of various membranes and ensures the maintenance of asymmetric distribution of phospholipids. Phospholipid translocation also seems to be implicated in vesicle formation and in uptake of lipid signaling molecules. The beta subunit may assist in binding of the phospholipid substrate. Required for the proper folding, assembly and ER to Golgi exit of the ATP8A2:TMEM30A flippase complex. ATP8A2:TMEM30A may be involved in regulation of neurite outgrowth, and, reconstituted to liposomes, predomiminantly transports phosphatidylserine (PS) and to a lesser extent phosphatidylethanolamine (PE). The ATP8A1:TMEM30A flippase complex seems to play a role in regulation of cell migration probably involving flippase-mediated translocation of phosphatidylethanolamine (PE) at the plasma membrane. Required for the formation of the ATP8A2, ATP8B1 and ATP8B2 P-type ATPAse intermediate phosphoenzymes. Involved in uptake of platelet-activating factor (PAF). Can also mediate the export of alpha subunits ATP8A1, ATP8B1, ATP8B2, ATP8B4, ATP10A, ATP10B, ATP10D, ATP11A, ATP11B and ATP11C from the ER to other membrane localizations. This chain is Cell cycle control protein 50A, found in Mus musculus (Mouse).